The following is a 229-amino-acid chain: Clathrin light chain B (229 aa).

2 stretches are compositionally biased toward low complexity: residues 1-17 (MAED…GAPE) and 45-58 (GAPA…AQPG). The interval 1–80 (MAEDFGFFSS…TVNGDVFQEA (80 aa)) is disordered. A phosphoserine mark is found at serine 11 and serine 13. Residues 93-155 (ADRLTQEPES…QVEKNKINNR (63 aa)) are involved in binding clathrin heavy chain. Phosphothreonine is present on threonine 187. An intrachain disulfide couples cysteine 199 to cysteine 209. Lysine 204 bears the N6-acetyllysine mark. Serine 217 carries the phosphoserine modification.

It belongs to the clathrin light chain family. As to quaternary structure, clathrin coats are formed from molecules containing 3 heavy chains and 3 light chains. Interacts (via N-terminus) with HIP1. Interacts with HIP1R.

It is found in the cytoplasmic vesicle membrane. The protein resides in the membrane. The protein localises to the coated pit. In terms of biological role, clathrin is the major protein of the polyhedral coat of coated pits and vesicles. This Rattus norvegicus (Rat) protein is Clathrin light chain B (Cltb).